A 384-amino-acid chain; its full sequence is Sialyltransferase-like protein 3 (384 aa).

Residues 1–5 lie on the Cytoplasmic side of the membrane; sequence MKRRH. Residues 6–26 traverse the membrane as a helical; Signal-anchor for type II membrane protein segment; that stretch reads WSHPSCGLLLLVAVFCLLLVF. Over 27–384 the chain is Lumenal; sequence RCSQLRHSGD…FRLPPVSFYR (358 aa). N241 carries N-linked (GlcNAc...) asparagine glycosylation.

This sequence belongs to the glycosyltransferase 29 family.

The protein localises to the golgi apparatus membrane. In terms of biological role, possesses sialyltransferase-like activity in vitro. Transfers sialic acid to the glycoprotein asialofetuin. The transferred sialic acid is linked to galactose of Gal-beta-1,3-GalNAc through alpha-2,6-linkage. This is Sialyltransferase-like protein 3 from Oryza sativa subsp. japonica (Rice).